A 79-amino-acid chain; its full sequence is Small ribosomal subunit protein uS17 (79 aa).

The protein belongs to the universal ribosomal protein uS17 family. As to quaternary structure, part of the 30S ribosomal subunit.

Functionally, one of the primary rRNA binding proteins, it binds specifically to the 5'-end of 16S ribosomal RNA. The polypeptide is Small ribosomal subunit protein uS17 (Mesorhizobium japonicum (strain LMG 29417 / CECT 9101 / MAFF 303099) (Mesorhizobium loti (strain MAFF 303099))).